A 759-amino-acid chain; its full sequence is LPS-assembly protein LptD (759 aa).

The N-terminal stretch at 1-45 (MKPLKLELNPRDFNHYQAAFLPYRMKIKQPLHVLCFSVCSLSAVA) is a signal peptide.

Belongs to the LptD family. In terms of assembly, component of the lipopolysaccharide transport and assembly complex. Interacts with LptE and LptA.

Its subcellular location is the cell outer membrane. Its function is as follows. Together with LptE, is involved in the assembly of lipopolysaccharide (LPS) at the surface of the outer membrane. This chain is LPS-assembly protein LptD, found in Pseudoalteromonas atlantica (strain T6c / ATCC BAA-1087).